Here is a 196-residue protein sequence, read N- to C-terminus: Molybdenum cofactor guanylyltransferase (196 aa).

GTP-binding positions include 12 to 14 (LAG), lysine 25, asparagine 53, aspartate 71, and aspartate 101. Aspartate 101 contacts Mg(2+).

Belongs to the MobA family. Monomer. Mg(2+) serves as cofactor.

The protein resides in the cytoplasm. The catalysed reaction is Mo-molybdopterin + GTP + H(+) = Mo-molybdopterin guanine dinucleotide + diphosphate. Transfers a GMP moiety from GTP to Mo-molybdopterin (Mo-MPT) cofactor (Moco or molybdenum cofactor) to form Mo-molybdopterin guanine dinucleotide (Mo-MGD) cofactor. The sequence is that of Molybdenum cofactor guanylyltransferase from Bordetella petrii (strain ATCC BAA-461 / DSM 12804 / CCUG 43448).